Reading from the N-terminus, the 248-residue chain is Anamorsin homolog (248 aa).

The interval 4-129 (FKGLQKSLYI…ETGSSARLSF (126 aa)) is N-terminal SAM-like domain. Residues 130 to 161 (AKKNASAVNVWKISGDDEELIDEEELLDEEDK) form a linker region. [2Fe-2S] cluster contacts are provided by Cys172, Cys181, Cys184, and Cys186. The interval 172-186 (CSTTGKRKACKNCSC) is fe-S binding site A. [4Fe-4S] cluster contacts are provided by Cys209, Cys212, Cys220, and Cys223. 2 consecutive short sequence motifs (cx2C motif) follow at residues 209-212 (CGNC) and 220-223 (CSTC). The segment at 209–223 (CGNCYLGDAFRCSTC) is fe-S binding site B.

This sequence belongs to the anamorsin family. Monomer. [2Fe-2S] cluster serves as cofactor. [4Fe-4S] cluster is required as a cofactor.

It localises to the cytoplasm. It is found in the mitochondrion intermembrane space. Component of the cytosolic iron-sulfur (Fe-S) protein assembly (CIA) machinery. Required for the maturation of extramitochondrial Fe-S proteins. Part of an electron transfer chain functioning in an early step of cytosolic Fe-S biogenesis, facilitating the de novo assembly of a [4Fe-4S] cluster on the cytosolic Fe-S scaffold complex. Electrons are transferred from NADPH via a FAD- and FMN-containing diflavin oxidoreductase. Together with the diflavin oxidoreductase, also required for the assembly of the diferric tyrosyl radical cofactor of ribonucleotide reductase (RNR), probably by providing electrons for reduction during radical cofactor maturation in the catalytic small subunit. The chain is Anamorsin homolog from Drosophila melanogaster (Fruit fly).